The chain runs to 475 residues: tRNA (guanine(37)-N(1))-methyltransferase (475 aa).

S-adenosyl-L-methionine contacts are provided by residues His219, 258–259, and 286–287; these read DL and DG. The segment at 306 to 328 is disordered; that stretch reads KITKQKPTSNDKKRNRKVESPTV. S-adenosyl-L-methionine is bound at residue Asn349. Residues 456-469 show a composition bias toward polar residues; that stretch reads NLVSQSDVSKSSDN. Residues 456 to 475 are disordered; the sequence is NLVSQSDVSKSSDNILEKDT.

The protein belongs to the class I-like SAM-binding methyltransferase superfamily. TRM5/TYW2 family. In terms of assembly, monomer.

The protein resides in the mitochondrion matrix. Its subcellular location is the nucleus. It localises to the cytoplasm. It carries out the reaction guanosine(37) in tRNA + S-adenosyl-L-methionine = N(1)-methylguanosine(37) in tRNA + S-adenosyl-L-homocysteine + H(+). Its function is as follows. Specifically methylates the N1 position of guanosine-37 in various cytoplasmic and mitochondrial tRNAs. Methylation is not dependent on the nature of the nucleoside 5' of the target nucleoside. This is the first step in the biosynthesis of wybutosine (yW), a modified base adjacent to the anticodon of tRNAs and required for accurate decoding. In Batrachochytrium dendrobatidis (strain JAM81 / FGSC 10211) (Frog chytrid fungus), this protein is tRNA (guanine(37)-N(1))-methyltransferase.